Consider the following 389-residue polypeptide: Phospholipid phosphatase-related protein type 2 (389 aa).

Transmembrane regions (helical) follow at residues 14–34 (IIPC…AFFP) and 66–86 (FLGV…AGQV). N-linked (GlcNAc...) asparagine glycosylation occurs at asparagine 102. The next 3 membrane-spanning stretches (helical) occupy residues 147–167 (AALC…VFRV), 176–196 (SLCL…VAEY), and 203–223 (VLAG…CVVH). Residues serine 236 and serine 249 each carry the phosphoserine modification. 2 disordered regions span residues 255 to 280 (SVAQ…PQNC) and 295 to 351 (APAM…GRKL). A compositionally biased stretch (polar residues) spans 265-278 (SHSTPARLTPSKPQ). Residues 314–339 (TPLPLPLPLPAPAPSQGPSPSSPGPG) show a composition bias toward pro residues.

This sequence belongs to the PA-phosphatase related phosphoesterase family.

Its subcellular location is the membrane. The chain is Phospholipid phosphatase-related protein type 2 from Bos taurus (Bovine).